A 136-amino-acid polypeptide reads, in one-letter code: Secreted RxLR effector protein 10 (136 aa).

An N-terminal signal peptide occupies residues methionine 1 to alanine 22. A RxLR-dEER motif is present at residues arginine 42 to arginine 56. A disordered region spans residues arginine 42–glycine 78. Positions aspartate 53 to glycine 63 are enriched in basic and acidic residues.

This sequence belongs to the RxLR effector family.

It is found in the secreted. The protein resides in the host cytoplasm. It localises to the host nucleus. Effector that acts as a broad suppressor of cell death to interrupt plant immunity. Inhibits cell death induced by cell death-inducing proteins, including the PAMP elicitor INF1 from P.infestans. This chain is Secreted RxLR effector protein 10, found in Plasmopara viticola (Downy mildew of grapevine).